Here is a 1682-residue protein sequence, read N- to C-terminus: Cilia- and flagella-associated protein 43 (1682 aa).

WD repeat units lie at residues 168 to 207 (NPGMDVSQMSFNPMNWHQMCLSSSSAMSVWTIERSNQEHH), 262 to 305 (PKDD…VTVL), 315 to 354 (DGAPLINPLTLVYQKDGILASGIDGVIYSFIIKDSKYQVK), 358 to 397 (EFDGPVTHLVFSPSYKMLLIQTDKGSVYIYTFGAEMPLDK), 488 to 527 (LSQSPVKIVTYDQRGIFLLVGTEEGNIFVIDARPSKSFQI), and 697 to 738 (SHQG…ANIA). Positions 767–790 (RESTNEQQEETTESQKHLNSDSSE) are disordered. Coiled coils occupy residues 926–960 (KERTEEELQELSKVMQQKKTEIECLKLRKEIVEVQ) and 1171–1223 (SEDE…HLKR).

Belongs to the CFAP43 family. As to expression, expressed in testis. Expressed in the lung, brain, oviduct and nasal cavity.

The protein localises to the cell projection. It is found in the cilium. Its subcellular location is the flagellum. It localises to the cytoplasm. The protein resides in the cytoskeleton. The protein localises to the flagellum axoneme. It is found in the cilium axoneme. Functionally, flagellar protein involved in sperm flagellum axoneme organization and function. Involved in the regulation of the beating frequency of motile cilia on the epithelial cells of the respiratory tract. This chain is Cilia- and flagella-associated protein 43, found in Mus musculus (Mouse).